We begin with the raw amino-acid sequence, 1118 residues long: Cytospin-A (1118 aa).

Disordered regions lie at residues M1–S50, K75–I175, S294–E324, and S359–E391. Composition is skewed to low complexity over residues A34–A48, S80–A90, and K99–S113. A compositionally biased stretch (basic and acidic residues) spans S120–R131. Over residues N133–A145 the composition is skewed to polar residues. Positions T158–S171 are enriched in basic and acidic residues. The stretch at K168 to Q281 forms a coiled coil. Over residues S294–Q304 the composition is skewed to polar residues. A compositionally biased stretch (low complexity) spans S359–E373. S385, S386, and S390 each carry phosphoserine. Coiled-coil stretches lie at residues A395–L450 and R488–V808. S869, S882, and S888 each carry phosphoserine. Residues E916–R999 are disordered. Basic and acidic residues predominate over residues R947–S957. Residues T972 to R992 are compositionally biased toward low complexity. Residues G1012–E1117 form the Calponin-homology (CH) domain.

It belongs to the cytospin-A family. May interact with both microtubules and actin cytoskeleton.

The protein localises to the cytoplasm. Its subcellular location is the cytoskeleton. It is found in the spindle. It localises to the cell junction. The protein resides in the gap junction. In terms of biological role, involved in cytokinesis and spindle organization. May play a role in actin cytoskeleton organization and microtubule stabilization and hence required for proper cell adhesion and migration. This chain is Cytospin-A (Specc1l), found in Rattus norvegicus (Rat).